The primary structure comprises 624 residues: Protein FAM234B (624 aa).

A disordered region spans residues 1–91; sequence MATVLSRALK…GFPSEPLGGL (91 aa). At serine 16 the chain carries Phosphoserine. The residue at position 26 (threonine 26) is a Phosphothreonine. 3 positions are modified to phosphoserine: serine 30, serine 33, and serine 63. Residues 107–127 form a helical membrane-spanning segment; the sequence is VFLLTLVISMVLVLLCAFLIP.

This sequence belongs to the FAM234 family.

It localises to the membrane. The protein resides in the golgi outpost. It is found in the cytoplasm. Its subcellular location is the cytoskeleton. The protein localises to the microtubule organizing center. This Mus musculus (Mouse) protein is Protein FAM234B.